Here is a 133-residue protein sequence, read N- to C-terminus: Thioredoxin H2 (133 aa).

The interval 1–22 (MGGALSTVFGSGEDATAAGTES) is disordered. The region spanning 6–133 (STVFGSGEDA…LEKKVSKLRA (128 aa)) is the Thioredoxin domain. Residues C59 and C62 each act as nucleophile in the active site. The cysteines at positions 59 and 62 are disulfide-linked.

This sequence belongs to the thioredoxin family. Plant H-type subfamily. Interacts with MDH1.

It localises to the cytoplasm. The protein resides in the mitochondrion. Functionally, thiol-disulfide oxidoreductase probably involved in the redox regulation of a number of cytosolic enzymes. Possesses insulin disulfide bonds reducing activity. This is Thioredoxin H2 (TRX2) from Arabidopsis thaliana (Mouse-ear cress).